The primary structure comprises 51 residues: uncharacterized protein (51 aa).

The next 2 membrane-spanning stretches (helical) occupy residues 6 to 26 and 28 to 48; these read LLGV…ICID and SSVF…FVLL.

Its subcellular location is the host membrane. This is an uncharacterized protein from Enterobacteria phage T4 (Bacteriophage T4).